The chain runs to 79 residues: Small ribosomal subunit protein bS18c (79 aa).

It belongs to the bacterial ribosomal protein bS18 family. As to quaternary structure, part of the 30S ribosomal subunit.

It is found in the plastid. It localises to the chloroplast. This is Small ribosomal subunit protein bS18c from Chaetosphaeridium globosum (Charophycean green alga).